The chain runs to 90 residues: Large ribosomal subunit protein uL23c (90 aa).

The protein belongs to the universal ribosomal protein uL23 family. In terms of assembly, part of the 50S ribosomal subunit.

It localises to the plastid. It is found in the chloroplast. Its function is as follows. Binds to 23S rRNA. The protein is Large ribosomal subunit protein uL23c (rpl23) of Oltmannsiellopsis viridis (Marine flagellate).